Reading from the N-terminus, the 121-residue chain is Large ribosomal subunit protein uL14 (121 aa).

The protein belongs to the universal ribosomal protein uL14 family. In terms of assembly, part of the 50S ribosomal subunit. Forms a cluster with proteins L3 and L19. In the 70S ribosome, L14 and L19 interact and together make contacts with the 16S rRNA in bridges B5 and B8.

In terms of biological role, binds to 23S rRNA. Forms part of two intersubunit bridges in the 70S ribosome. This Bacteroides fragilis (strain ATCC 25285 / DSM 2151 / CCUG 4856 / JCM 11019 / LMG 10263 / NCTC 9343 / Onslow / VPI 2553 / EN-2) protein is Large ribosomal subunit protein uL14.